Reading from the N-terminus, the 557-residue chain is Dihydroxy-acid dehydratase (557 aa).

Residue D78 participates in Mg(2+) binding. C119 provides a ligand contact to [2Fe-2S] cluster. Positions 120 and 121 each coordinate Mg(2+). N6-carboxylysine is present on K121. [2Fe-2S] cluster is bound at residue C192. Residue E442 coordinates Mg(2+). The Proton acceptor role is filled by S468.

The protein belongs to the IlvD/Edd family. In terms of assembly, homodimer. [2Fe-2S] cluster serves as cofactor. The cofactor is Mg(2+).

It carries out the reaction (2R)-2,3-dihydroxy-3-methylbutanoate = 3-methyl-2-oxobutanoate + H2O. It catalyses the reaction (2R,3R)-2,3-dihydroxy-3-methylpentanoate = (S)-3-methyl-2-oxopentanoate + H2O. Its pathway is amino-acid biosynthesis; L-isoleucine biosynthesis; L-isoleucine from 2-oxobutanoate: step 3/4. It participates in amino-acid biosynthesis; L-valine biosynthesis; L-valine from pyruvate: step 3/4. Functionally, functions in the biosynthesis of branched-chain amino acids. Catalyzes the dehydration of (2R,3R)-2,3-dihydroxy-3-methylpentanoate (2,3-dihydroxy-3-methylvalerate) into 2-oxo-3-methylpentanoate (2-oxo-3-methylvalerate) and of (2R)-2,3-dihydroxy-3-methylbutanoate (2,3-dihydroxyisovalerate) into 2-oxo-3-methylbutanoate (2-oxoisovalerate), the penultimate precursor to L-isoleucine and L-valine, respectively. This is Dihydroxy-acid dehydratase from Bacillus thuringiensis subsp. konkukian (strain 97-27).